Consider the following 511-residue polypeptide: Histidine ammonia-lyase (511 aa).

The 5-imidazolinone (Ala-Gly) cross-link spans 142–144; that stretch reads ASG. Ser143 bears the 2,3-didehydroalanine (Ser) mark.

This sequence belongs to the PAL/histidase family. Post-translationally, contains an active site 4-methylidene-imidazol-5-one (MIO), which is formed autocatalytically by cyclization and dehydration of residues Ala-Ser-Gly.

Its subcellular location is the cytoplasm. It catalyses the reaction L-histidine = trans-urocanate + NH4(+). The protein operates within amino-acid degradation; L-histidine degradation into L-glutamate; N-formimidoyl-L-glutamate from L-histidine: step 1/3. The polypeptide is Histidine ammonia-lyase (Brucella abortus (strain S19)).